A 156-amino-acid chain; its full sequence is Cyclic pyranopterin monophosphate synthase (156 aa).

Substrate-binding positions include 75–77 and 111–112; these read LCH and ME. The active site involves D126.

This sequence belongs to the MoaC family. Homohexamer; trimer of dimers.

It carries out the reaction (8S)-3',8-cyclo-7,8-dihydroguanosine 5'-triphosphate = cyclic pyranopterin phosphate + diphosphate. The protein operates within cofactor biosynthesis; molybdopterin biosynthesis. Functionally, catalyzes the conversion of (8S)-3',8-cyclo-7,8-dihydroguanosine 5'-triphosphate to cyclic pyranopterin monophosphate (cPMP). This chain is Cyclic pyranopterin monophosphate synthase, found in Corynebacterium glutamicum (strain ATCC 13032 / DSM 20300 / JCM 1318 / BCRC 11384 / CCUG 27702 / LMG 3730 / NBRC 12168 / NCIMB 10025 / NRRL B-2784 / 534).